Reading from the N-terminus, the 80-residue chain is Acyl carrier protein (80 aa).

The Carrier domain occupies serine 2–leucine 77. Serine 37 is modified (O-(pantetheine 4'-phosphoryl)serine).

This sequence belongs to the acyl carrier protein (ACP) family. In terms of processing, 4'-phosphopantetheine is transferred from CoA to a specific serine of apo-ACP by AcpS. This modification is essential for activity because fatty acids are bound in thioester linkage to the sulfhydryl of the prosthetic group.

The protein resides in the cytoplasm. It participates in lipid metabolism; fatty acid biosynthesis. Carrier of the growing fatty acid chain in fatty acid biosynthesis. This chain is Acyl carrier protein, found in Amoebophilus asiaticus (strain 5a2).